A 58-amino-acid chain; its full sequence is AVQKVDGEPRAHLGALLARYIQQARKAPSGRMSVIKNLQNLDPSHRISDRDYMGWMDF.

The residue at position 52 (Tyr52) is a Sulfotyrosine. Position 58 is a phenylalanine amide (Phe58).

The protein belongs to the gastrin/cholecystokinin family. In terms of assembly, binds to CCK-A receptors in the pancreas and CCK-B receptors in the brain. cholecystokinin 8 binds CCK-A receptors more potently than cholecystokinin 58, cholecystokinin 8 and cholecystokinin 58 bind CCK-B receptors with equal affinity. In terms of processing, the precursor is cleaved by proteases to produce a number of active cholecystokinins. Post-translationally, cholecystokinin 58 occurs in both sulfated (CCK58(s)) and nonsulfated (CCK58(ns)) forms, which differ in their receptor-binding activities. CCK58(s) binds to the CCK-A receptor with high affinity, CCK58(ns) binds poorly to the CCK-A receptor. CCK58(s) and CCK58(ns) both bind the CCK-B receptor. The precursor is cleaved by ACE, which removes the Gly-Arg-Arg peptide at the C-terminus, leading to mature hormone.

Its subcellular location is the secreted. This peptide hormone induces gall bladder contraction and the release of pancreatic enzymes in the gut. Its function in the brain is not clear. Binding to CCK-A receptors stimulates amylase release from the pancreas, binding to CCK-B receptors stimulates gastric acid secretion. cholecystokinin 58 and cholecystokinin 8, but not cholecystokinin 58 desnonopeptide, stimulate amylase release from the pancreas. cholecystokinin 58, but not cholecystokinin 8, increases bile-pancreatic volume. The protein is Cholecystokinins of Canis lupus familiaris (Dog).